We begin with the raw amino-acid sequence, 692 residues long: Potassium-transporting ATPase ATP-binding subunit (692 aa).

The next 4 membrane-spanning stretches (helical) occupy residues 35–55, 64–84, 213–233, and 254–274; these read VMFI…KDLY, LQIS…EAIA, IALT…VMSL, and ILIS…LSAI. D307 acts as the 4-aspartylphosphate intermediate in catalysis. ATP contacts are provided by residues D344, E348, 377-384, and K400; that span reads FSASTKMS. Residues D523 and D527 each contribute to the Mg(2+) site. The next 3 helical transmembrane spans lie at 592 to 612, 626 to 646, and 672 to 692; these read YFAI…VGPL, AVLS…PLAL, and MVIP…LGII.

Belongs to the cation transport ATPase (P-type) (TC 3.A.3) family. Type IA subfamily. In terms of assembly, the system is composed of three essential subunits: KdpA, KdpB and KdpC.

It is found in the cell inner membrane. The enzyme catalyses K(+)(out) + ATP + H2O = K(+)(in) + ADP + phosphate + H(+). Its function is as follows. Part of the high-affinity ATP-driven potassium transport (or Kdp) system, which catalyzes the hydrolysis of ATP coupled with the electrogenic transport of potassium into the cytoplasm. This subunit is responsible for energy coupling to the transport system and for the release of the potassium ions to the cytoplasm. The protein is Potassium-transporting ATPase ATP-binding subunit of Leptospira interrogans serogroup Icterohaemorrhagiae serovar Lai (strain 56601).